Consider the following 92-residue polypeptide: Protein RnfH (92 aa).

The protein belongs to the UPF0125 (RnfH) family.

The chain is Protein RnfH from Neisseria gonorrhoeae (strain NCCP11945).